Consider the following 504-residue polypeptide: MSFSVDVLANIAIELQRGIGHQDRFQRLITTLRQVLECDASALLRYDSRQFIPLAIDGLAKDVLGRRFALEGHPRLEAIARAGDVVRFPADSELPDPYDGLIPGQESLKVHACVGLPLFAGQNLIGALTLDGMQPDQFDVFSDEELRLIAALAAGALSNALLIEQLESQNMLPGDAAPFEAVKQTQMIGLSPGMTQLKKEIEIVAASDLNVLISGETGTGKELVAKAIHEASPRAVNPLVYLNCAALPESVAESELFGHVKGAFTGAISNRSGKFEMADNGTLFLDEIGELSLALQAKLLRVLQYGDIQRVGDDRSLRVDVRVLAATNRDLREEVLAGRFRADLFHRLSVFPLSVPPLRERGDDVILLAGYFCEQCRLRQGLSRVVLSAGARNLLQHYSFPGNVRELEHAIHRAVVLARATRSGDEVILEAQHFAFPEVTLPPPEVAAVPVVKQNLREATEAFQRETIRQALAQNHHNWAACARMLETDVANLHRLAKRLGLKD.

Aspartate 57 is modified (4-aspartylphosphate). The 230-residue stretch at 187 to 416 (MIGLSPGMTQ…LEHAIHRAVV (230 aa)) folds into the Sigma-54 factor interaction domain. ATP contacts are provided by residues 215-222 (GETGTGKE) and 278-287 (ADNGTLFLDE). A DNA-binding region (H-T-H motif) is located at residues 479 to 498 (WAACARMLETDVANLHRLAK).

It functions in the pathway nitrogen metabolism; nitric oxide reduction. In terms of biological role, required for the expression of anaerobic nitric oxide (NO) reductase, acts as a transcriptional activator for at least the norVW operon. Activation also requires sigma-54. The protein is Anaerobic nitric oxide reductase transcription regulator NorR of Escherichia coli O157:H7.